A 139-amino-acid polypeptide reads, in one-letter code: Putative nickel-responsive regulator (139 aa).

Positions 77, 88, 90, and 96 each coordinate Ni(2+).

Belongs to the transcriptional regulatory CopG/NikR family. It depends on Ni(2+) as a cofactor.

Functionally, transcriptional regulator. The protein is Putative nickel-responsive regulator of Haloarcula marismortui (strain ATCC 43049 / DSM 3752 / JCM 8966 / VKM B-1809) (Halobacterium marismortui).